Consider the following 430-residue polypeptide: 3-phosphoshikimate 1-carboxyvinyltransferase (430 aa).

3-phosphoshikimate contacts are provided by Lys-21, Ser-22, and Arg-26. Lys-21 provides a ligand contact to phosphoenolpyruvate. Positions 95 and 123 each coordinate phosphoenolpyruvate. Positions 167, 169, 315, and 342 each coordinate 3-phosphoshikimate. Position 169 (Gln-169) interacts with phosphoenolpyruvate. Asp-315 functions as the Proton acceptor in the catalytic mechanism. Phosphoenolpyruvate contacts are provided by Arg-346 and Arg-390.

Belongs to the EPSP synthase family. As to quaternary structure, monomer.

It is found in the cytoplasm. It carries out the reaction 3-phosphoshikimate + phosphoenolpyruvate = 5-O-(1-carboxyvinyl)-3-phosphoshikimate + phosphate. The protein operates within metabolic intermediate biosynthesis; chorismate biosynthesis; chorismate from D-erythrose 4-phosphate and phosphoenolpyruvate: step 6/7. Its function is as follows. Catalyzes the transfer of the enolpyruvyl moiety of phosphoenolpyruvate (PEP) to the 5-hydroxyl of shikimate-3-phosphate (S3P) to produce enolpyruvyl shikimate-3-phosphate and inorganic phosphate. The sequence is that of 3-phosphoshikimate 1-carboxyvinyltransferase from Endomicrobium trichonymphae.